A 50-amino-acid polypeptide reads, in one-letter code: Thrombin-like enzyme BpirSP27 (50 aa).

The Peptidase S1 domain occupies 1–50 (VVGGDECNINEHRSLVAIFNSTGFFCSGILLNQEWVLTASHCDSTNFQMK). N20 carries an N-linked (GlcNAc...) asparagine glycan. C26 and C42 are joined by a disulfide. H41 functions as the Charge relay system in the catalytic mechanism.

Belongs to the peptidase S1 family. Snake venom subfamily. In terms of assembly, monomer. N-glycosylated. Expressed by the venom gland.

It is found in the secreted. Inhibited by serine protease inhibitors PMSF, benzamidine, leupeptin and aprotinin, as well as by copper (Cu2+) and manganese (Mn2+) ions. Not inhibited by metalloprotease inhibitors EDTA, EGTA and 1,10-phenanthroline, as well as by barium (Ba2+) and calcium ion (Ca2+). In terms of biological role, snake venom serine protease that interferes with the hemostatic system of the prey. It preferentially degrades the Bbeta chain (FGB) of fibrinogen, with minor effects on the Aalpha chain (FGA). It presents a lower ability to degrade fibrin clots than BpirSP41. It hydrolyzes chromogenic substrates S-2238 (used for testing thrombin activity), S-2222 (factor Xa), S-2266 (glandular kallikrein and factor XIa), S-2302 (plasma kallikrein, factor XIa and XIIa), and S-2251 (plasmin). It shows a decrease in the clotting time of human plasma in the presence of increasing doses of the enzyme. Its minimum coagulant dose (MCD) is 3.5 ug. It also promotes platelet aggregation in a concentration-dependent manner in the presence or absence of calcium. It also shows 20% inhibition of the hemolytic activity promoted by the complement pathways and possess only a minor role in the induction of edema and pain in rat. The chain is Thrombin-like enzyme BpirSP27 from Bothrops pirajai (Piraja's lancehead).